We begin with the raw amino-acid sequence, 205 residues long: Transcriptional regulatory protein PdtaR (205 aa).

The 115-residue stretch at 15–129 (RVLIAEDEAL…DLIPAIELAV (115 aa)) folds into the Response regulatory domain. Residue Asp-65 is modified to 4-aspartylphosphate. The region spanning 135–196 (ITALEGEVAT…TMKRVAEVVL (62 aa)) is the ANTAR domain.

In terms of processing, phosphorylated and activated by PdtaS.

The protein resides in the cytoplasm. Member of the two-component regulatory system PdtaR/PdtaS. This two-component system plays an essential role in mycobacterial adaptation to poor nutrient conditions. PdtaR probably acts at the level of transcriptional antitermination rather than transcriptional initiation. Functionally, in addition, the PdtaR/PdtaS two-component system controls copper and nitric oxide (NO) resistance downstream of the intramembrane protease Rip1. This coupled Rip1/PdtaS/PdtaR circuit controls NO resistance and acute lung infection in mice by relieving PdtaR/PdtaS-mediated repression of isonitrile chalkophore biosynthesis. Two signals are required to fully inactivate the PdtaR/PdtaS system and mediate NO resistance: a cytoplasmic inhibitory signal through the PdtaS kinase mediated by direct sensing of NO and the production of PPE1-5', an NO-induced small RNA, to sequester PdtaR. In Mycobacterium tuberculosis (strain CDC 1551 / Oshkosh), this protein is Transcriptional regulatory protein PdtaR (pdtaR).